A 248-amino-acid polypeptide reads, in one-letter code: Probable phosphatase VPA0505 (248 aa).

Zn(2+) is bound by residues H8, H10, H16, H41, E74, H102, H132, D194, and H196.

It belongs to the PHP family. It depends on Zn(2+) as a cofactor.

The protein is Probable phosphatase VPA0505 of Vibrio parahaemolyticus serotype O3:K6 (strain RIMD 2210633).